The primary structure comprises 436 residues: [Pyruvate dehydrogenase (acetyl-transferring)] kinase isozyme 1, mitochondrial (436 aa).

The N-terminal 28 residues, 1-28 (MRLARLLRGAALAGPGPGLRAAGFSRSF), are a transit peptide targeting the mitochondrion. Position 136 is a phosphotyrosine; by FGFR1 (Y136). A Histidine kinase domain is found at 163–393 (YKESFGVDPV…DAVIYIKALS (231 aa)). Y243 bears the Phosphotyrosine; by FGFR1, ABL1, FLT3 and JAK2 mark. The residue at position 244 (Y244) is a Phosphotyrosine; by FGFR1. Residues 279–286 (ELFKNAMR), D318, 337–338 (ST), and 354–359 (GFGYGL) contribute to the ATP site. T338 is modified (phosphothreonine). K405 is subject to N6-succinyllysine.

It belongs to the PDK/BCKDK protein kinase family. As to quaternary structure, homodimer, and heterodimer with PDK2. Interacts with the pyruvate dehydrogenase complex subunit DLAT, and is part of the multimeric pyruvate dehydrogenase complex that contains multiple copies of pyruvate dehydrogenase (E1), dihydrolipoamide acetyltransferase (DLAT, E2) and lipoamide dehydrogenase (DLD, E3). Interacts with phosphoglycerate kinase PGK1; the interaction is direct, occurs under hypoxic conditions and leads to PDK1-mediated inhibition of pyruvate dehydrogenase complex activity. Phosphorylated by constitutively activated ABL1, FGFR1, FLT3 and JAK2 (in vitro), and this may also occur in cancer cells that express constitutively activated ABL1, FGFR1, FLT3 and JAK2. Phosphorylation at Tyr-243 and Tyr-244 strongly increases kinase activity, while phosphorylation at Tyr-136 has a lesser effect. Phosphorylated under hypoxic conditions at Thr-338 by phosphoglycerate kinase PGK1 which has an activating effect. In terms of tissue distribution, expressed predominantly in the heart. Detected at lower levels in liver, skeletal muscle and pancreas.

It localises to the mitochondrion matrix. The catalysed reaction is L-seryl-[pyruvate dehydrogenase E1 alpha subunit] + ATP = O-phospho-L-seryl-[pyruvate dehydrogenase E1 alpha subunit] + ADP + H(+). With respect to regulation, activity is enhanced by binding to the pyruvate dehydrogenase subunit DLAT. Inhibited by AZD7545; this compound interferes with DLAT binding and thereby inhibits kinase activity. Inhibited by dichloroacetate and radicicol. Activated under hypoxic conditions by phosphoglycerate kinase PGK1-mediated phosphorylation at Thr-338. In terms of biological role, kinase that plays a key role in regulation of glucose and fatty acid metabolism and homeostasis via phosphorylation of the pyruvate dehydrogenase subunits PDHA1 and PDHA2. This inhibits pyruvate dehydrogenase activity, and thereby regulates metabolite flux through the tricarboxylic acid cycle, down-regulates aerobic respiration and inhibits the formation of acetyl-coenzyme A from pyruvate. Plays an important role in cellular responses to hypoxia and is important for cell proliferation under hypoxia. The protein is [Pyruvate dehydrogenase (acetyl-transferring)] kinase isozyme 1, mitochondrial (PDK1) of Homo sapiens (Human).